The following is a 199-amino-acid chain: Dephospho-CoA kinase (199 aa).

Positions 3–199 constitute a DPCK domain; sequence TLGVTGGIGS…ELYWAVTGGQ (197 aa). Position 11–16 (11–16) interacts with ATP; the sequence is GSGKTT.

The protein belongs to the CoaE family.

It is found in the cytoplasm. The catalysed reaction is 3'-dephospho-CoA + ATP = ADP + CoA + H(+). It participates in cofactor biosynthesis; coenzyme A biosynthesis; CoA from (R)-pantothenate: step 5/5. Its function is as follows. Catalyzes the phosphorylation of the 3'-hydroxyl group of dephosphocoenzyme A to form coenzyme A. The protein is Dephospho-CoA kinase of Salinibacter ruber (strain DSM 13855 / M31).